The primary structure comprises 384 residues: Early estrogen-induced gene 1 protein (384 aa).

The region spanning 2–145 (AFLMKKKKFK…ILKVTIGMFL (144 aa)) is the C2 NT-type domain. Residues 129–138 (NTRQDNSILK) are required for interaction with TNFRSF11A/RANK. The tract at residues 173-315 (LTCKGGGTSS…RRKKDSVESH (143 aa)) is disordered. Over residues 183 to 193 (GGSSTNSLTGS) the composition is skewed to low complexity. Over residues 227–254 (SRNSSYASQQSKISGYSTEHSRSSSLSD) the composition is skewed to polar residues. Basic and acidic residues-rich tracts occupy residues 280–292 (GSER…EKPP) and 299–315 (HLSD…VESH).

The protein belongs to the EEIG family. As to quaternary structure, part of a complex composed of EEIG1, TNFRSF11A/RANK, PLCG2, GAB2, TEC and BTK; complex formation increases in the presence of TNFSF11/RANKL. Interacts with PRDM1/BLIMP1; following TNFSF11/RANKL stimulation in bone marrow-derived macrophages, the interaction promotes the binding of PRDM1/BLIMP1 to the gene promoter of IRF8.

The protein resides in the nucleus. The protein localises to the cytoplasm. It localises to the membrane raft. Key component of TNFSF11/RANKL- and TNF-induced osteoclastogenesis pathways, thereby mediates bone resorption in pathological bone loss conditions. Required for TNFSF11/RANKL-induced osteoclastogenesis via its interaction with TNFRSF11A/RANK, thereby facilitates the downsteam transcription of NFATC1 and activation of PLCG2. Facilitates recruitment of the transcriptional repressor PRDM1/BLIMP1 to the promoter of the anti-osteoclastogenesis gene IRF8, thereby resulting in transcription of osteoclast differentiation factors. May play a role in estrogen action. The polypeptide is Early estrogen-induced gene 1 protein (Homo sapiens (Human)).